We begin with the raw amino-acid sequence, 244 residues long: 14-3-3 protein beta/alpha-A (244 aa).

Residue Met1 is modified to N-acetylmethionine.

This sequence belongs to the 14-3-3 family. Homodimer, and heterodimer with other family members.

The protein localises to the cytoplasm. Functionally, adapter protein implicated in the regulation of a large spectrum of both general and specialized signaling pathways. Binds to a large number of partners, usually by recognition of a phosphoserine or phosphothreonine motif. Binding generally results in the modulation of the activity of the binding partner. In Xenopus laevis (African clawed frog), this protein is 14-3-3 protein beta/alpha-A (ywhab-a).